A 208-amino-acid polypeptide reads, in one-letter code: 3-demethoxyubiquinol 3-hydroxylase (208 aa).

Fe cation is bound by residues Glu-57, Glu-87, His-90, Glu-139, Glu-171, and His-174.

Belongs to the COQ7 family. Fe cation serves as cofactor.

Its subcellular location is the cell membrane. It catalyses the reaction a 5-methoxy-2-methyl-3-(all-trans-polyprenyl)benzene-1,4-diol + AH2 + O2 = a 3-demethylubiquinol + A + H2O. It functions in the pathway cofactor biosynthesis; ubiquinone biosynthesis. Its function is as follows. Catalyzes the hydroxylation of 2-nonaprenyl-3-methyl-6-methoxy-1,4-benzoquinol during ubiquinone biosynthesis. The chain is 3-demethoxyubiquinol 3-hydroxylase from Burkholderia multivorans (strain ATCC 17616 / 249).